A 141-amino-acid chain; its full sequence is Large ribosomal subunit protein uL11 (141 aa).

Belongs to the universal ribosomal protein uL11 family. Part of the ribosomal stalk of the 50S ribosomal subunit. Interacts with L10 and the large rRNA to form the base of the stalk. L10 forms an elongated spine to which L12 dimers bind in a sequential fashion forming a multimeric L10(L12)X complex. Post-translationally, one or more lysine residues are methylated.

Forms part of the ribosomal stalk which helps the ribosome interact with GTP-bound translation factors. The chain is Large ribosomal subunit protein uL11 from Chlorobium luteolum (strain DSM 273 / BCRC 81028 / 2530) (Pelodictyon luteolum).